The chain runs to 276 residues: Shikimate dehydrogenase (NADP(+)) (276 aa).

Residues 15–17 (SMS) and T63 contribute to the shikimate site. K67 functions as the Proton acceptor in the catalytic mechanism. Residue D79 participates in NADP(+) binding. Residues N88 and D103 each coordinate shikimate. NADP(+)-binding positions include 130–134 (GAGGA), 154–159 (NRTLSR), and I217. Y219 is a binding site for shikimate. G240 is a binding site for NADP(+).

It belongs to the shikimate dehydrogenase family. In terms of assembly, homodimer.

It carries out the reaction shikimate + NADP(+) = 3-dehydroshikimate + NADPH + H(+). Its pathway is metabolic intermediate biosynthesis; chorismate biosynthesis; chorismate from D-erythrose 4-phosphate and phosphoenolpyruvate: step 4/7. Its function is as follows. Involved in the biosynthesis of the chorismate, which leads to the biosynthesis of aromatic amino acids. Catalyzes the reversible NADPH linked reduction of 3-dehydroshikimate (DHSA) to yield shikimate (SA). This is Shikimate dehydrogenase (NADP(+)) from Oceanobacillus iheyensis (strain DSM 14371 / CIP 107618 / JCM 11309 / KCTC 3954 / HTE831).